A 428-amino-acid polypeptide reads, in one-letter code: Trigger factor (428 aa).

A PPIase FKBP-type domain is found at 163 to 248 (GDMVVIDYKG…VHEIKEKELP (86 aa)).

Belongs to the FKBP-type PPIase family. Tig subfamily.

Its subcellular location is the cytoplasm. It catalyses the reaction [protein]-peptidylproline (omega=180) = [protein]-peptidylproline (omega=0). Its function is as follows. Involved in protein export. Acts as a chaperone by maintaining the newly synthesized protein in an open conformation. Functions as a peptidyl-prolyl cis-trans isomerase. The chain is Trigger factor from Alkaliphilus metalliredigens (strain QYMF).